The chain runs to 192 residues: Casparian strip membrane protein 4 (192 aa).

Residues 1-29 lie on the Cytoplasmic side of the membrane; sequence MTKDVVIEHGESSKAPLVPAPVAAGVGRA. Residues 30-50 traverse the membrane as a helical segment; that stretch reads VSIADVFLRFLSIVATIASAI. Topologically, residues 51-79 are extracellular; that stretch reads SMGTTNETLPFFTQFIQFEAKYSDLPSFT. The N-linked (GlcNAc...) asparagine glycan is linked to Asn56. The chain crosses the membrane as a helical span at residues 80-100; that stretch reads FFVAANAVVCTYLVLSIPLSI. Topologically, residues 101-112 are cytoplasmic; it reads VHIIRPRARYSR. The helical transmembrane segment at 113–133 threads the bilayer; the sequence is LILVFFDAVMLALLTAGASAA. Residues 134–166 lie on the Extracellular side of the membrane; that stretch reads AAIVYLAHKGNVRANWFAICQQFDSFCERISGS. A helical transmembrane segment spans residues 167 to 187; sequence LIGSFAAMVLLIVLIFLSAFA. The Cytoplasmic segment spans residues 188–192; it reads LARRH.

The protein belongs to the Casparian strip membrane proteins (CASP) family. In terms of assembly, homodimer and heterodimers.

Its subcellular location is the cell membrane. Regulates membrane-cell wall junctions and localized cell wall deposition. Required for establishment of the Casparian strip membrane domain (CSD) and the subsequent formation of Casparian strips, a cell wall modification of the root endodermis that determines an apoplastic barrier between the intraorganismal apoplasm and the extraorganismal apoplasm and prevents lateral diffusion. This chain is Casparian strip membrane protein 4, found in Sorghum bicolor (Sorghum).